Here is a 67-residue protein sequence, read N- to C-terminus: MSLFPVIVVFGLSFPPIFFELLLSLAIFWLVCRVLVPTGIYDFVWHPALFNTALYCCLFYLISRLFV.

2 helical membrane passes run 3–23 (LFPVIVVFGLSFPPIFFELLL) and 47–67 (PALFNTALYCCLFYLISRLFV).

The protein belongs to the AaeX family.

It localises to the cell membrane. In Escherichia coli O157:H7, this protein is Protein AaeX.